A 319-amino-acid chain; its full sequence is Glycine--tRNA ligase alpha subunit (319 aa).

Positions 290 to 319 are disordered; that stretch reads RQQQPEAPAPGPAAVVGGRDRKDACDVKEG. Residues 307–319 are compositionally biased toward basic and acidic residues; the sequence is GRDRKDACDVKEG.

Belongs to the class-II aminoacyl-tRNA synthetase family. Tetramer of two alpha and two beta subunits.

It is found in the cytoplasm. The enzyme catalyses tRNA(Gly) + glycine + ATP = glycyl-tRNA(Gly) + AMP + diphosphate. This Moorella thermoacetica (strain ATCC 39073 / JCM 9320) protein is Glycine--tRNA ligase alpha subunit.